Reading from the N-terminus, the 380-residue chain is Lipid-A-disaccharide synthase (380 aa).

This sequence belongs to the LpxB family.

The catalysed reaction is a lipid X + a UDP-2-N,3-O-bis[(3R)-3-hydroxyacyl]-alpha-D-glucosamine = a lipid A disaccharide + UDP + H(+). Its pathway is bacterial outer membrane biogenesis; LPS lipid A biosynthesis. Its function is as follows. Condensation of UDP-2,3-diacylglucosamine and 2,3-diacylglucosamine-1-phosphate to form lipid A disaccharide, a precursor of lipid A, a phosphorylated glycolipid that anchors the lipopolysaccharide to the outer membrane of the cell. The sequence is that of Lipid-A-disaccharide synthase from Francisella tularensis subsp. novicida (strain U112).